We begin with the raw amino-acid sequence, 118 residues long: Large ribosomal subunit protein bL20 (118 aa).

This sequence belongs to the bacterial ribosomal protein bL20 family.

Binds directly to 23S ribosomal RNA and is necessary for the in vitro assembly process of the 50S ribosomal subunit. It is not involved in the protein synthesizing functions of that subunit. The polypeptide is Large ribosomal subunit protein bL20 (Desulforamulus reducens (strain ATCC BAA-1160 / DSM 100696 / MI-1) (Desulfotomaculum reducens)).